A 564-amino-acid polypeptide reads, in one-letter code: Septation ring formation regulator EzrA (564 aa).

At 1 to 4 (MVLF) the chain is on the extracellular side. A helical membrane pass occupies residues 5–23 (IILAILVVILIAIGVLFYM). Residues 24-564 (RSNKRNLIEK…KHIEEQVIKE (541 aa)) lie on the Cytoplasmic side of the membrane. Coiled coils occupy residues 84 to 126 (VEEK…HQVT), 165 to 223 (EAAE…LIRE), 271 to 303 (MISR…YEVK), and 350 to 435 (VRQF…RRLL).

The protein belongs to the EzrA family.

The protein localises to the cell membrane. Its function is as follows. Negative regulator of FtsZ ring formation; modulates the frequency and position of FtsZ ring formation. Inhibits FtsZ ring formation at polar sites. Interacts either with FtsZ or with one of its binding partners to promote depolymerization. This is Septation ring formation regulator EzrA from Staphylococcus epidermidis (strain ATCC 12228 / FDA PCI 1200).